A 267-amino-acid chain; its full sequence is Undecaprenyl-diphosphatase (267 aa).

A run of 7 helical transmembrane segments spans residues Gln39 to Phe59, Trp87 to Ile107, Leu111 to Val131, Ala149 to Ala169, Phe189 to Thr209, Ala218 to Leu238, and Val244 to Leu264.

This sequence belongs to the UppP family.

It localises to the cell inner membrane. The catalysed reaction is di-trans,octa-cis-undecaprenyl diphosphate + H2O = di-trans,octa-cis-undecaprenyl phosphate + phosphate + H(+). In terms of biological role, catalyzes the dephosphorylation of undecaprenyl diphosphate (UPP). Confers resistance to bacitracin. In Photobacterium profundum (strain SS9), this protein is Undecaprenyl-diphosphatase.